The chain runs to 350 residues: Alcohol dehydrogenase 1 (350 aa).

Zn(2+)-binding residues include Cys-46, His-69, Cys-100, Cys-103, Cys-106, Cys-114, and Cys-156. NAD(+) is bound by residues 180-186 (GAGGGLG), Asp-204, Lys-209, 271-273 (VGL), and Arg-343.

Belongs to the zinc-containing alcohol dehydrogenase family. As to quaternary structure, homotetramer. Requires Zn(2+) as cofactor.

Its subcellular location is the cytoplasm. It carries out the reaction a primary alcohol + NAD(+) = an aldehyde + NADH + H(+). It catalyses the reaction a secondary alcohol + NAD(+) = a ketone + NADH + H(+). In Candida albicans (Yeast), this protein is Alcohol dehydrogenase 1 (ADH1).